Consider the following 242-residue polypeptide: Uridylate kinase (242 aa).

12 to 15 (KLSG) lines the ATP pocket. Residues 20–25 (GDEGFG) are involved in allosteric activation by GTP. Glycine 54 provides a ligand contact to UMP. ATP is bound by residues glycine 55 and arginine 59. Residues aspartate 74 and 135-142 (TGSPFFTT) contribute to the UMP site. ATP contacts are provided by threonine 162, tyrosine 168, and aspartate 171.

It belongs to the UMP kinase family. In terms of assembly, homohexamer.

The protein resides in the cytoplasm. The catalysed reaction is UMP + ATP = UDP + ADP. It functions in the pathway pyrimidine metabolism; CTP biosynthesis via de novo pathway; UDP from UMP (UMPK route): step 1/1. With respect to regulation, allosterically activated by GTP. Inhibited by UTP. Functionally, catalyzes the reversible phosphorylation of UMP to UDP. The chain is Uridylate kinase from Pasteurella multocida (strain Pm70).